The following is a 192-amino-acid chain: UPF0312 protein PFLU_5725 (192 aa).

The first 23 residues, 1-23 (MLKKTLAALAIGTALLSAGQVMA), serve as a signal peptide directing secretion.

This sequence belongs to the UPF0312 family. Type 1 subfamily.

The protein resides in the periplasm. The protein is UPF0312 protein PFLU_5725 of Pseudomonas fluorescens (strain SBW25).